A 319-amino-acid polypeptide reads, in one-letter code: Ankyrin repeat domain-containing protein 1 (319 aa).

A coiled-coil region spans residues 61–89 (KSEKQREAELKKKKLEQRSKLENLEDLEI). ANK repeat units follow at residues 152-181 (YKRT…QIEF), 185-214 (LEST…KISA), 218-247 (LLST…DLNA), 251-280 (EGDT…DLNI), and 284-315 (AGKT…KTSR).

In terms of assembly, interacts with YBX1. Interacts with TTN/titin. As to expression, mainly expressed in activated vascular endothelial cells. To a lower extent, also expressed in hepatoma cells.

It is found in the nucleus. In terms of biological role, may play an important role in endothelial cell activation. May act as a nuclear transcription factor that negatively regulates the expression of cardiac genes. Induction seems to be correlated with apoptotic cell death in hepatoma cells. The polypeptide is Ankyrin repeat domain-containing protein 1 (ANKRD1) (Homo sapiens (Human)).